Here is a 131-residue protein sequence, read N- to C-terminus: Peptide methionine sulfoxide reductase MsrB (131 aa).

Positions 8 to 130 (LDEWRSMLDP…NSVCIDLRPR (123 aa)) constitute a MsrB domain. Zn(2+) contacts are provided by Cys47, Cys50, Cys96, and Cys99. Cys119 serves as the catalytic Nucleophile.

It belongs to the MsrB Met sulfoxide reductase family. Zn(2+) serves as cofactor.

It catalyses the reaction L-methionyl-[protein] + [thioredoxin]-disulfide + H2O = L-methionyl-(R)-S-oxide-[protein] + [thioredoxin]-dithiol. The chain is Peptide methionine sulfoxide reductase MsrB from Pseudomonas putida (strain ATCC 700007 / DSM 6899 / JCM 31910 / BCRC 17059 / LMG 24140 / F1).